The sequence spans 1134 residues: Phytochrome 1 (1134 aa).

The GAF domain occupies 219–401 (DIGLLCDTVV…VFGLQLNMEA (183 aa)). C324 contacts phytochromobilin. The region spanning 616-687 (VANEMVRLIE…RLLYLALQGD (72 aa)) is the PAS 1 domain. Residues 690–746 (QNVELKLKTFGGQKDKEAVILVVNACASRDVSDNVVGVCFVGQDVTGQKVVMDKFTR) form the PAC domain. Residues 750 to 821 (DYKAIVQNPN…KGQDAVTKFM (72 aa)) enclose the PAS 2 domain. A Histidine kinase domain is found at 901 to 1121 (YIRQEIKNPL…LVSLELPLAQ (221 aa)).

Belongs to the phytochrome family. In terms of assembly, homodimer. Contains one covalently linked phytochromobilin chromophore.

In terms of biological role, regulatory photoreceptor which exists in two forms that are reversibly interconvertible by light: the Pr form that absorbs maximally in the red region of the spectrum and the Pfr form that absorbs maximally in the far-red region. Photoconversion of Pr to Pfr induces an array of morphogenic responses, whereas reconversion of Pfr to Pr cancels the induction of those responses. Pfr controls the expression of a number of nuclear genes including those encoding the small subunit of ribulose-bisphosphate carboxylase, chlorophyll A/B binding protein, protochlorophyllide reductase, rRNA, etc. It also controls the expression of its own gene(s) in a negative feedback fashion. This Selaginella martensii (Martens's spike moss) protein is Phytochrome 1 (PHY1).